The following is a 285-amino-acid chain: Transmembrane protein 53-B (285 aa).

The chain crosses the membrane as a helical span at residues 165-185 (FLALAAFAIMVIILRIVLYPV).

Belongs to the TMEM53 family.

It localises to the nucleus outer membrane. Functionally, ensures normal bone formation, through the negative regulation of bone morphogenetic protein (BMP) signaling in osteoblast lineage cells by blocking cytoplasm-nucleus translocation of phosphorylated SMAD proteins. In Xenopus laevis (African clawed frog), this protein is Transmembrane protein 53-B (tmem53-b).